Here is a 548-residue protein sequence, read N- to C-terminus: Glucose-6-phosphate isomerase (548 aa).

The Proton donor role is filled by Glu353. Catalysis depends on residues His384 and Lys512.

Belongs to the GPI family.

It localises to the cytoplasm. It catalyses the reaction alpha-D-glucose 6-phosphate = beta-D-fructose 6-phosphate. It participates in carbohydrate biosynthesis; gluconeogenesis. The protein operates within carbohydrate degradation; glycolysis; D-glyceraldehyde 3-phosphate and glycerone phosphate from D-glucose: step 2/4. In terms of biological role, catalyzes the reversible isomerization of glucose-6-phosphate to fructose-6-phosphate. The sequence is that of Glucose-6-phosphate isomerase from Pseudoalteromonas translucida (strain TAC 125).